We begin with the raw amino-acid sequence, 341 residues long: MLTNASQVLLRNSDLVKDQSVLVLNYESDHLPKELLATASSVCGLALDYHHHLMMQPYAAANLTLHFGHQLPTDECFDTVIVYFPKAKALAPYLFNLAAKHLKPQGQLIVAGENKGGIKSLPKQLPSYFDKAFKVDNARHCILFTSELNSPAPELKLKDWLSRYQLDTPQGQVTICNLVGVFSEKKLDEGTQLLLANLPKMSGNVLDFGCGAGVITAALLKAQPDLKLECVDINAMALASCELTLEANGFTAKVFASDGLAQTSQRYDGIISNPPFHDGLASTTNIATNFVKDSANNLKAGGLFHIVANRHLPYSDTIAEHFGSVNVLAENNKYKIYSNVK.

It belongs to the methyltransferase superfamily. RsmC family. As to quaternary structure, monomer.

It localises to the cytoplasm. It carries out the reaction guanosine(1207) in 16S rRNA + S-adenosyl-L-methionine = N(2)-methylguanosine(1207) in 16S rRNA + S-adenosyl-L-homocysteine + H(+). Functionally, specifically methylates the guanine in position 1207 of 16S rRNA in the 30S particle. The polypeptide is Ribosomal RNA small subunit methyltransferase C (Shewanella pealeana (strain ATCC 700345 / ANG-SQ1)).